The following is a 148-amino-acid chain: IQ domain-containing protein F5 (148 aa).

2 IQ domains span residues 11 to 40 (ERSAAVFIQAWWRGMLVRRTLLHAALRAWI) and 67 to 96 (QEWAAVRLQSWVRMWCVRQRYCRLLNAVRI).

The sequence is that of IQ domain-containing protein F5 (IQCF5) from Homo sapiens (Human).